The following is a 117-amino-acid chain: Large ribosomal subunit protein bL20 (117 aa).

The protein belongs to the bacterial ribosomal protein bL20 family.

Functionally, binds directly to 23S ribosomal RNA and is necessary for the in vitro assembly process of the 50S ribosomal subunit. It is not involved in the protein synthesizing functions of that subunit. The sequence is that of Large ribosomal subunit protein bL20 from Streptococcus suis (strain 05ZYH33).